A 304-amino-acid chain; its full sequence is Non-specific ribonucleoside hydrolase RihC (304 aa).

H233 is a catalytic residue.

It belongs to the IUNH family. RihC subfamily.

Functionally, hydrolyzes both purine and pyrimidine ribonucleosides with a broad-substrate specificity. The chain is Non-specific ribonucleoside hydrolase RihC from Escherichia coli O17:K52:H18 (strain UMN026 / ExPEC).